Reading from the N-terminus, the 944-residue chain is Isoleucine--tRNA ligase (944 aa).

The 'HIGH' region motif lies at 58–68; the sequence is PYANGSIHIGH. Glutamate 563 serves as a coordination point for L-isoleucyl-5'-AMP. Residues 604–608 carry the 'KMSKS' region motif; it reads KMSKS. ATP is bound at residue lysine 607. Positions 907, 910, 927, and 930 each coordinate Zn(2+).

This sequence belongs to the class-I aminoacyl-tRNA synthetase family. IleS type 1 subfamily. Monomer. Zn(2+) is required as a cofactor.

It localises to the cytoplasm. It catalyses the reaction tRNA(Ile) + L-isoleucine + ATP = L-isoleucyl-tRNA(Ile) + AMP + diphosphate. Catalyzes the attachment of isoleucine to tRNA(Ile). As IleRS can inadvertently accommodate and process structurally similar amino acids such as valine, to avoid such errors it has two additional distinct tRNA(Ile)-dependent editing activities. One activity is designated as 'pretransfer' editing and involves the hydrolysis of activated Val-AMP. The other activity is designated 'posttransfer' editing and involves deacylation of mischarged Val-tRNA(Ile). The protein is Isoleucine--tRNA ligase of Salmonella paratyphi A (strain ATCC 9150 / SARB42).